We begin with the raw amino-acid sequence, 209 residues long: Ribosomal RNA large subunit methyltransferase E (209 aa).

Glycine 63, tryptophan 65, aspartate 83, aspartate 99, and aspartate 124 together coordinate S-adenosyl-L-methionine. Catalysis depends on lysine 164, which acts as the Proton acceptor.

The protein belongs to the class I-like SAM-binding methyltransferase superfamily. RNA methyltransferase RlmE family.

It is found in the cytoplasm. It catalyses the reaction uridine(2552) in 23S rRNA + S-adenosyl-L-methionine = 2'-O-methyluridine(2552) in 23S rRNA + S-adenosyl-L-homocysteine + H(+). Functionally, specifically methylates the uridine in position 2552 of 23S rRNA at the 2'-O position of the ribose in the fully assembled 50S ribosomal subunit. This is Ribosomal RNA large subunit methyltransferase E from Proteus mirabilis (strain HI4320).